The primary structure comprises 359 residues: Fructose-bisphosphate aldolase (359 aa).

D-glyceraldehyde 3-phosphate is bound at residue serine 50. Residue aspartate 83 is the Proton donor of the active site. Zn(2+) is bound by residues histidine 84, aspartate 105, glutamate 142, and histidine 198. Glycine 199 contributes to the dihydroxyacetone phosphate binding site. Histidine 232 provides a ligand contact to Zn(2+). Dihydroxyacetone phosphate contacts are provided by residues 233 to 235 (GSS) and 275 to 278 (NIDT).

Requires Zn(2+) as cofactor.

The enzyme catalyses beta-D-fructose 1,6-bisphosphate = D-glyceraldehyde 3-phosphate + dihydroxyacetone phosphate. It participates in carbohydrate degradation; glycolysis; D-glyceraldehyde 3-phosphate and glycerone phosphate from D-glucose: step 4/4. Functionally, catalyzes the aldol condensation of dihydroxyacetone phosphate (DHAP or glycerone-phosphate) with glyceraldehyde 3-phosphate (G3P) to form fructose 1,6-bisphosphate (FBP) in gluconeogenesis and the reverse reaction in glycolysis. The protein is Fructose-bisphosphate aldolase of Nostoc sp. (strain PCC 7120 / SAG 25.82 / UTEX 2576).